The chain runs to 421 residues: Putative leucine-rich repeat protein R380 (421 aa).

7 LRR repeats span residues 48–69 (YLEK…QYLP), 70–85 (KIKE…THIP), 89–110 (NLIK…NQSK), 111–129 (LLYL…IFLP), 130–150 (ECRE…NYFP), 151–172 (NLRI…SSLI), and 173–191 (ELNI…PQLV).

This Acanthamoeba polyphaga (Amoeba) protein is Putative leucine-rich repeat protein R380.